The following is a 580-amino-acid chain: E3 ubiquitin-protein ligase TRIM45 (580 aa).

Residues 29–98 (CPTCLRLFKV…QIGILCPVCD (70 aa)) form an RING-type zinc finger. 2 B box-type zinc fingers span residues 130–176 (GQGL…MVDL) and 186–227 (GKPI…YDFT). Zn(2+) contacts are provided by C135, C138, C158, H162, C191, H194, C214, and H219. Residues 249–329 (VEALEDALAQ…LLADMRTGVE (81 aa)) are a coiled coil. The Filamin repeat unit spans residues 394 to 497 (TQEVDPAQCV…VQGSPFNVTV (104 aa)).

It belongs to the TRIM/RBCC family.

It is found in the cytoplasm. Its subcellular location is the nucleus. The enzyme catalyses S-ubiquitinyl-[E2 ubiquitin-conjugating enzyme]-L-cysteine + [acceptor protein]-L-lysine = [E2 ubiquitin-conjugating enzyme]-L-cysteine + N(6)-ubiquitinyl-[acceptor protein]-L-lysine.. Its function is as follows. E3 ubiquitin-protein ligase that plays a role in the regulation of inflammatory response. Mechanistically, mediates the 'Lys-48'-linked polyubiquitination of TAB2, a regulatory protein of the kinase TAK1, leading to its degradation via the proteasomal pathway and inhibition of the TLR-mediated inflammatory immune response. May act as a transcriptional repressor in mitogen-activated protein kinase signaling pathway. The polypeptide is E3 ubiquitin-protein ligase TRIM45 (Trim45) (Mus musculus (Mouse)).